Here is a 137-residue protein sequence, read N- to C-terminus: DNA-binding protein H-NS (137 aa).

Residues 112–117 (QGRTPA) mediate DNA binding.

This sequence belongs to the histone-like protein H-NS family. In terms of assembly, homodimer that oligomerizes on DNA into higher-order complexes that form bridges between disparate regions of DNA compacting it. Interacts with Hha, YdgT and StpA.

It is found in the cytoplasm. The protein resides in the nucleoid. Functionally, a DNA-binding protein implicated in transcriptional repression and chromosome organization and compaction. Binds nucleation sites in AT-rich DNA and bridges them, forming higher-order nucleoprotein complexes and condensing the chromosome. As many horizontally transferred genes are AT-rich, it plays a central role in silencing foreign genes. A subset of genes are repressed by H-NS in association with other proteins. This Salmonella paratyphi A (strain ATCC 9150 / SARB42) protein is DNA-binding protein H-NS (hns).